A 414-amino-acid chain; its full sequence is Succinylornithine transaminase (414 aa).

N6-(pyridoxal phosphate)lysine is present on Lys260.

It belongs to the class-III pyridoxal-phosphate-dependent aminotransferase family. AstC subfamily. The cofactor is pyridoxal 5'-phosphate.

It carries out the reaction N(2)-succinyl-L-ornithine + 2-oxoglutarate = N-succinyl-L-glutamate 5-semialdehyde + L-glutamate. It participates in amino-acid degradation; L-arginine degradation via AST pathway; L-glutamate and succinate from L-arginine: step 3/5. Its function is as follows. Catalyzes the transamination of N(2)-succinylornithine and alpha-ketoglutarate into N(2)-succinylglutamate semialdehyde and glutamate. Can also act as an acetylornithine aminotransferase. The polypeptide is Succinylornithine transaminase (Yersinia enterocolitica serotype O:8 / biotype 1B (strain NCTC 13174 / 8081)).